The chain runs to 641 residues: Probable potassium transport system protein Kup (641 aa).

12 helical membrane passes run 29-49 (ISLA…LYAI), 66-86 (ILGV…LKYL), 119-139 (WVLV…AMIT), 156-176 (PAFA…LFLF), 185-205 (GALF…LGII), 231-251 (LHGF…EALY), 266-286 (WVLF…AFLL), 298-318 (ALVP…ATVI), 356-376 (IYVP…VLGF), 384-404 (AAYG…FFFV), 415-435 (VLWA…GASM), and 438-458 (LFHG…LMNT).

This sequence belongs to the HAK/KUP transporter (TC 2.A.72) family.

The protein localises to the cell inner membrane. It carries out the reaction K(+)(in) + H(+)(in) = K(+)(out) + H(+)(out). Its function is as follows. Transport of potassium into the cell. Likely operates as a K(+):H(+) symporter. This is Probable potassium transport system protein Kup from Chlorobium phaeovibrioides (strain DSM 265 / 1930) (Prosthecochloris vibrioformis (strain DSM 265)).